The chain runs to 352 residues: Long-chain-alcohol O-fatty-acyltransferase (352 aa).

Transmembrane regions (helical) follow at residues 13–33 (VWIS…VAPH), 34–54 (GGAL…FLPL), 67–87 (LYLV…LGPL), 128–148 (KVVL…IYEF), 155–175 (FVIS…TLAA), 239–259 (VAGA…VFFF), 267–287 (SWEV…EMVV), and 303–323 (GALT…PQLV).

The protein belongs to the wax synthase family.

It localises to the microsome membrane. It catalyses the reaction a long chain fatty alcohol + a fatty acyl-CoA = a wax ester + CoA. Functionally, catalyzes the final step in the synthesis of long-chain linear esters (waxes). Has activity with both saturated and monounsaturated acyl-CoA ranging from 14 to 24 carbons in length, but C20:1 acyl-CoA is the preferred substrate. This chain is Long-chain-alcohol O-fatty-acyltransferase, found in Simmondsia chinensis (Jojoba).